Here is a 200-residue protein sequence, read N- to C-terminus: Large ribosomal subunit protein uL4 (200 aa).

Positions 38–73 (GRQGTKGQKSRSDVSGGGKRPWRQKGTGRARAGTTR) are disordered.

Belongs to the universal ribosomal protein uL4 family. Part of the 50S ribosomal subunit.

Functionally, one of the primary rRNA binding proteins, this protein initially binds near the 5'-end of the 23S rRNA. It is important during the early stages of 50S assembly. It makes multiple contacts with different domains of the 23S rRNA in the assembled 50S subunit and ribosome. Its function is as follows. Forms part of the polypeptide exit tunnel. The protein is Large ribosomal subunit protein uL4 of Ectopseudomonas mendocina (strain ymp) (Pseudomonas mendocina).